Here is a 300-residue protein sequence, read N- to C-terminus: N-carbamoylputrescine amidase (300 aa).

Positions 8 to 266 (VTVAALQFAC…EAVLVAQFDL (259 aa)) constitute a CN hydrolase domain. Residue Glu47 is the Proton acceptor of the active site. Lys120 acts as the Proton donor in catalysis. Cys157 acts as the Nucleophile in catalysis.

This sequence belongs to the carbon-nitrogen hydrolase superfamily. As to quaternary structure, homooctamer.

The enzyme catalyses N-carbamoylputrescine + H2O + 2 H(+) = putrescine + NH4(+) + CO2. Its pathway is amine and polyamine biosynthesis; putrescine biosynthesis via agmatine pathway; putrescine from N-carbamoylputrescine (amidase route): step 1/1. In terms of biological role, involved in polyamine biosynthesis. The polypeptide is N-carbamoylputrescine amidase (CPA) (Solanum lycopersicum (Tomato)).